Here is a 283-residue protein sequence, read N- to C-terminus: Nucleoid occlusion protein (283 aa).

The segment at residues 148 to 167 is a DNA-binding region (H-T-H motif); it reads EALAQRLGKGQSTIANKLRL.

Belongs to the ParB family.

It is found in the cytoplasm. The protein localises to the nucleoid. Its function is as follows. Effects nucleoid occlusion by binding relatively nonspecifically to DNA and preventing the assembly of the division machinery in the vicinity of the nucleoid, especially under conditions that disturb the cell cycle. It helps to coordinate cell division and chromosome segregation by preventing the formation of the Z ring through the nucleoid, which would cause chromosome breakage. The protein is Nucleoid occlusion protein of Bacillus licheniformis (strain ATCC 14580 / DSM 13 / JCM 2505 / CCUG 7422 / NBRC 12200 / NCIMB 9375 / NCTC 10341 / NRRL NRS-1264 / Gibson 46).